An 805-amino-acid chain; its full sequence is Centrosomal protein of 85 kDa-like (805 aa).

Disordered stretches follow at residues 1–27 (MWGR…AGPD) and 50–89 (RNNH…LSFK). Residue Ser-15 is modified to Phosphoserine. Residues 60 to 74 (ASDSGDTGIGTSCSD) are compositionally biased toward polar residues. A Phosphoserine modification is found at Ser-207. The stretch at 439-682 (SQQGEFEQKL…LENQRQTDET (244 aa)) forms a coiled coil.

This sequence belongs to the CEP85 family. In terms of tissue distribution, isoform 1 and isoform 4 are expressed in spleen, lymph, thymus, tonsil and peripheral blood leukocytes, with isoform 1 expressed at higher levels. Isoform 4 is detected in K-562 leukemia cells and in the blood of precursor T lymphoblastic lymphoma (T-ALL) patients.

The protein resides in the cytoplasm. Its subcellular location is the cytoskeleton. It is found in the microtubule organizing center. It localises to the centrosome. Its function is as follows. Plays an essential role in neuronal cell migration. The sequence is that of Centrosomal protein of 85 kDa-like from Homo sapiens (Human).